We begin with the raw amino-acid sequence, 295 residues long: sn-glycerol-3-phosphate transport system permease protein UgpA (295 aa).

Topologically, residues 1–11 (MSSSRPVFRSR) are cytoplasmic. Residues 12-32 (WLPYLLVAPQLIITVIFFIWP) form a helical membrane-spanning segment. Residues 33-80 (AGEALWYSLQSVDPFGFSSQFVGLDNFVTLFHDSYYLDSFWTTIKFST) lie on the Periplasmic side of the membrane. Positions 76 to 284 (IKFSTFVTVS…FLVIVLTVVQ (209 aa)) constitute an ABC transmembrane type-1 domain. Residues 81–101 (FVTVSGLLVSLFFAALVEYIV) form a helical membrane-spanning segment. Residues 102-109 (RGSRFYQT) lie on the Cytoplasmic side of the membrane. A helical membrane pass occupies residues 110-130 (LMLLPYAVAPAVAAVLWIFLF). The Periplasmic portion of the chain corresponds to 131-156 (NPGRGLITHFLAEFGYDWNHAQNSGQ). A helical membrane pass occupies residues 157–177 (AMFLVVFASVWKQISYNFLFF). At 178 to 207 (YAALQSIPRSLIEAAAIDGAGPIRRFFKIA) the chain is on the cytoplasmic side. Residues 208–228 (LPLIAPVSFFLLVVNLVYAFF) form a helical membrane-spanning segment. Residues 229 to 262 (DTFPVIDAATSGGPVQATTTLIYKIYREGFTGLD) are Periplasmic-facing. A helical transmembrane segment spans residues 263–283 (LASSAAQSMVLMFLVIVLTVV). Residues 284–295 (QFRYVESKVRYQ) are Cytoplasmic-facing.

This sequence belongs to the binding-protein-dependent transport system permease family. UgpAE subfamily. The complex is composed of two ATP-binding proteins (UgpC), two transmembrane proteins (UgpA and UgpE) and a solute-binding protein (UgpB).

The protein localises to the cell inner membrane. Functionally, part of the ABC transporter complex UgpBAEC involved in sn-glycerol-3-phosphate (G3P) import. Probably responsible for the translocation of the substrate across the membrane. This is sn-glycerol-3-phosphate transport system permease protein UgpA (ugpA) from Shigella flexneri.